Reading from the N-terminus, the 474-residue chain is Adenosylhomocysteinase (474 aa).

Positions 61, 136, and 196 each coordinate substrate. An NAD(+)-binding site is contributed by Thr197–Thr199. Residues Lys226 and Asp230 each contribute to the substrate site. NAD(+)-binding positions include Asn231, Gly260 to Gly265, Glu283, Asn318, Ile339 to His341, and Asn384.

It belongs to the adenosylhomocysteinase family. NAD(+) serves as cofactor.

The protein resides in the cytoplasm. It catalyses the reaction S-adenosyl-L-homocysteine + H2O = L-homocysteine + adenosine. The protein operates within amino-acid biosynthesis; L-homocysteine biosynthesis; L-homocysteine from S-adenosyl-L-homocysteine: step 1/1. May play a key role in the regulation of the intracellular concentration of adenosylhomocysteine. In Ralstonia nicotianae (strain ATCC BAA-1114 / GMI1000) (Ralstonia solanacearum), this protein is Adenosylhomocysteinase.